Reading from the N-terminus, the 326-residue chain is Olfactory receptor 8A1 (326 aa).

At 1 to 45 (MGFLSPMHPCRPPTQRRMAAGNHSTVTEFILKGLTKRADLQLPLF) the chain is on the extracellular side. Residue Asn22 is glycosylated (N-linked (GlcNAc...) asparagine). A helical transmembrane segment spans residues 46-66 (LLFLGIYLVTIVGNLGMITLI). Residues 67-77 (CLNSQLHTPMY) are Cytoplasmic-facing. A helical transmembrane segment spans residues 78 to 100 (YFLSNLSLMDLCYSSVITPKMLV). The Extracellular segment spans residues 101 to 116 (NFVSEKNIISYAGCMS). Cys114 and Cys195 are disulfide-bonded. A helical membrane pass occupies residues 117–137 (QLYFFLVFVIAECYMLTVMAY). Residues 138–150 (DRYVAICHPLLYN) are Cytoplasmic-facing. Residues 151 to 171 (IIMSHHTCLLLVAVVYAIGLI) form a helical membrane-spanning segment. Residues 172-222 (GSTIETGLMLKLPYCEHLISHYFCDILPLMKLSCSSTYDVEMTVFFSAGFN) are Extracellular-facing. Residues 223–243 (IIVTSLTVLVSYTFILSSILG) form a helical membrane-spanning segment. The Cytoplasmic portion of the chain corresponds to 244–260 (ISTTEGRSKAFSTCSSH). Residues 261–281 (LAAVGMFYGSTAFMYLKPSTI) form a helical membrane-spanning segment. Residues 282-287 (SSLTQE) lie on the Extracellular side of the membrane. Residues 288 to 308 (NVASVFYTTVIPMLNPLIYSL) traverse the membrane as a helical segment. Residues 309–326 (RNKEVKAAVQKTLRGKLF) lie on the Cytoplasmic side of the membrane.

This sequence belongs to the G-protein coupled receptor 1 family.

The protein localises to the cell membrane. In terms of biological role, odorant receptor. The chain is Olfactory receptor 8A1 (OR8A1) from Homo sapiens (Human).